The chain runs to 339 residues: Phenylalanine--tRNA ligase alpha subunit (339 aa).

A Mg(2+)-binding site is contributed by glutamate 254.

It belongs to the class-II aminoacyl-tRNA synthetase family. Phe-tRNA synthetase alpha subunit type 1 subfamily. As to quaternary structure, tetramer of two alpha and two beta subunits. Mg(2+) serves as cofactor.

Its subcellular location is the cytoplasm. The catalysed reaction is tRNA(Phe) + L-phenylalanine + ATP = L-phenylalanyl-tRNA(Phe) + AMP + diphosphate + H(+). In Clostridium botulinum (strain 657 / Type Ba4), this protein is Phenylalanine--tRNA ligase alpha subunit.